The sequence spans 520 residues: MSYTSTDSDHNESPAADDNGSDCRSRWDGHALKKGPWSSAEDDILIDYVNKHGEGNWNAVQKHTSLFRCGKSCRLRWANHLRPNLKKGAFSQEEEQLIVELHAKMGNRWARMAAHLPGRTDNEIKNYWNTRIKRRQRAGLPLYPPEMHVEALEWSQEYAKSRVMGEDRRHQDFLQLGSCESNVFFDTLNFTDMVPGTFDLADMTAYKNMGNCASSPRYENFMTPTIPSSKRLWESELLYPGCSSTIKQEFSSPEQFRNTSPQTISKTCSFSVPCDVEHPLYGNRHSPVMIPDSHTPTDGIVPYSKPLYGAVKLELPSFQYSETTFDQWKKSSSPPHSDLLDPFDTYIQSPPPPTGGEESDLYSNFDTGLLDMLLLEAKIRNNSTKNNLYRSCASTIPSADLGQVTVSQTKSEEFDNSLKSFLVHSEMSTQNADETPPRQREKKRKPLLDITRPDVLLASSWLDHGLGIVKETGSMSDALAVLLGDDIGNDYMNMSVGASSGVGSCSWSNMPPVCQMTELP.

Residues 1–24 form a disordered region; the sequence is MSYTSTDSDHNESPAADDNGSDCR. 2 HTH myb-type domains span residues 29 to 81 and 82 to 136; these read GHAL…ANHL and RPNL…KRRQ. 2 consecutive DNA-binding regions (H-T-H motif) follow at residues 57 to 81 and 109 to 132; these read WNAV…ANHL and WARM…NTRI. Residues 331–342 are compositionally biased toward low complexity; it reads SSSPPHSDLLDP. Disordered stretches follow at residues 331–359 and 426–447; these read SSSP…GEES and EMST…RKPL.

Mostly expressed in stems, shoot apices, flowers and floral shoot tips, and, to a lower extent, in roots (e.g. root tips), seedlings, leaves and siliques.

It is found in the nucleus. Transcriptional activator of alpha-amylase expression that binds to 5'-CAACTGTC-3' motif in target gene promoter. Positive regulator of abscisic acid (ABA) responses leading to growth arrest during seed germination. In vegetative tissues, inhibits growth by reducing cell proliferation. Promotes the expression of aleurone-related genes (e.g. CP1, CP, GASA1, BXL1 and BXL2) in seeds. Together with MYB65 and MYB101, promotes the programmed cell death (PCD) the vacuolation of protein storage vacuoles (PSVs) in the aleurone layers during seed germination. Binds to a GARE site (GA-response element) in the LEAFY promoter, essential for its gibberellic acid (GA)-mediated induction. Together with MYB65, facilitates anther and tapetum development. The chain is Transcription factor MYB33 from Arabidopsis thaliana (Mouse-ear cress).